Here is a 351-residue protein sequence, read N- to C-terminus: Glycerol-3-phosphate dehydrogenase [NAD(P)+] (351 aa).

Residues Ser-12, Trp-13, His-33, and Lys-114 each coordinate NADPH. Residues Lys-114, Gly-145, and Ser-147 each contribute to the sn-glycerol 3-phosphate site. NADPH is bound at residue Ala-149. Residues Lys-200, Asp-253, Ser-263, Arg-264, and Asn-265 each coordinate sn-glycerol 3-phosphate. Lys-200 serves as the catalytic Proton acceptor. Arg-264 is an NADPH binding site. Val-288 and Glu-290 together coordinate NADPH.

Belongs to the NAD-dependent glycerol-3-phosphate dehydrogenase family.

Its subcellular location is the cytoplasm. It catalyses the reaction sn-glycerol 3-phosphate + NAD(+) = dihydroxyacetone phosphate + NADH + H(+). The catalysed reaction is sn-glycerol 3-phosphate + NADP(+) = dihydroxyacetone phosphate + NADPH + H(+). It functions in the pathway membrane lipid metabolism; glycerophospholipid metabolism. In terms of biological role, catalyzes the reduction of the glycolytic intermediate dihydroxyacetone phosphate (DHAP) to sn-glycerol 3-phosphate (G3P), the key precursor for phospholipid synthesis. The chain is Glycerol-3-phosphate dehydrogenase [NAD(P)+] from Lacticaseibacillus paracasei (strain ATCC 334 / BCRC 17002 / CCUG 31169 / CIP 107868 / KCTC 3260 / NRRL B-441) (Lactobacillus paracasei).